Consider the following 100-residue polypeptide: Small ribosomal subunit protein uS14c (100 aa).

This sequence belongs to the universal ribosomal protein uS14 family. Part of the 30S ribosomal subunit.

The protein resides in the plastid. Its subcellular location is the chloroplast. Its function is as follows. Binds 16S rRNA, required for the assembly of 30S particles. In Pyropia yezoensis (Susabi-nori), this protein is Small ribosomal subunit protein uS14c.